Consider the following 445-residue polypeptide: Phosphoglucosamine mutase 1 (445 aa).

Serine 102 serves as the catalytic Phosphoserine intermediate. Residues serine 102, aspartate 241, aspartate 243, and aspartate 245 each coordinate Mg(2+). Serine 102 carries the post-translational modification Phosphoserine.

It belongs to the phosphohexose mutase family. The cofactor is Mg(2+). Post-translationally, activated by phosphorylation.

The catalysed reaction is alpha-D-glucosamine 1-phosphate = D-glucosamine 6-phosphate. In terms of biological role, catalyzes the conversion of glucosamine-6-phosphate to glucosamine-1-phosphate. The sequence is that of Phosphoglucosamine mutase 1 from Shewanella sp. (strain MR-7).